We begin with the raw amino-acid sequence, 622 residues long: Polypeptide N-acetylgalactosaminyltransferase 6 (622 aa).

Residues 1–8 (MRLLRRRH) are Cytoplasmic-facing. The chain crosses the membrane as a helical; Signal-anchor for type II membrane protein span at residues 9 to 28 (MPLRLAMVGCAFVLFLFLLH). Residues 29–622 (RDVSSREEAT…SDPHQLWLFV (594 aa)) lie on the Lumenal side of the membrane. The N-linked (GlcNAc...) asparagine glycan is linked to Asn86. Disulfide bonds link Cys165–Cys402 and Cys393–Cys474. A catalytic subdomain A region spans residues 176–285 (LATTSVIIVF…HGWLEPLLAR (110 aa)). Mn(2+) contacts are provided by Asp269, His271, and His407. Positions 348–410 (PIKSPTFAGG…PCSVVGHVFR (63 aa)) are catalytic subdomain B. The N-linked (GlcNAc...) asparagine glycan is linked to Asn476. The region spanning 506-622 (TNQCLDVGEN…SDPHQLWLFV (117 aa)) is the Ricin B-type lectin domain. A disulfide bond links Cys509 and Cys527. 4 residues coordinate UDP-N-acetyl-alpha-D-galactosamine: Asp511, Glu514, His528, and Asn533. 2 disulfide bridges follow: Cys553–Cys566 and Cys597–Cys610.

The protein belongs to the glycosyltransferase 2 family. GalNAc-T subfamily. Requires Mn(2+) as cofactor. In terms of tissue distribution, expressed in placenta and trachea. Weakly expressed in brain and pancreas. Expressed in fibroblast. Weakly or not expressed in lung, liver, muscle, kidney, spleen, thymus, prostate, testis, ovary, intestine, colon, leukocyte, stomach, thyroid, spinal cord, lymph node, trachea, adrenal gland and bone marrow.

The protein localises to the golgi apparatus membrane. It catalyses the reaction L-seryl-[protein] + UDP-N-acetyl-alpha-D-galactosamine = a 3-O-[N-acetyl-alpha-D-galactosaminyl]-L-seryl-[protein] + UDP + H(+). The catalysed reaction is L-threonyl-[protein] + UDP-N-acetyl-alpha-D-galactosamine = a 3-O-[N-acetyl-alpha-D-galactosaminyl]-L-threonyl-[protein] + UDP + H(+). It participates in protein modification; protein glycosylation. Catalyzes the initial reaction in O-linked oligosaccharide biosynthesis, the transfer of an N-acetyl-D-galactosamine residue to a serine or threonine residue on the protein receptor. May participate in synthesis of oncofetal fibronectin. Has activity toward MUC1A, MUC2, EA2 and fibronectin peptides. Glycosylates FGF23. The chain is Polypeptide N-acetylgalactosaminyltransferase 6 (GALNT6) from Homo sapiens (Human).